Here is a 329-residue protein sequence, read N- to C-terminus: GTP 3',8-cyclase (329 aa).

The 227-residue stretch at 8 to 234 (AFARKFFYLR…QIRQRSDGPA (227 aa)) folds into the Radical SAM core domain. Arginine 17 serves as a coordination point for GTP. Cysteine 24 and cysteine 28 together coordinate [4Fe-4S] cluster. Tyrosine 30 lines the S-adenosyl-L-methionine pocket. Residue cysteine 31 participates in [4Fe-4S] cluster binding. Arginine 68 is a binding site for GTP. Glycine 72 serves as a coordination point for S-adenosyl-L-methionine. A GTP-binding site is contributed by threonine 99. Residue serine 123 participates in S-adenosyl-L-methionine binding. A GTP-binding site is contributed by lysine 160. Position 194 (methionine 194) interacts with S-adenosyl-L-methionine. Residues cysteine 257 and cysteine 260 each contribute to the [4Fe-4S] cluster site. 262–264 (RLR) lines the GTP pocket. Cysteine 274 contributes to the [4Fe-4S] cluster binding site.

The protein belongs to the radical SAM superfamily. MoaA family. In terms of assembly, monomer and homodimer. Requires [4Fe-4S] cluster as cofactor.

It carries out the reaction GTP + AH2 + S-adenosyl-L-methionine = (8S)-3',8-cyclo-7,8-dihydroguanosine 5'-triphosphate + 5'-deoxyadenosine + L-methionine + A + H(+). The protein operates within cofactor biosynthesis; molybdopterin biosynthesis. Catalyzes the cyclization of GTP to (8S)-3',8-cyclo-7,8-dihydroguanosine 5'-triphosphate. The polypeptide is GTP 3',8-cyclase (Klebsiella pneumoniae (strain 342)).